A 262-amino-acid polypeptide reads, in one-letter code: Ribosomal RNA small subunit methyltransferase A (262 aa).

Residues His11, Ile13, Gly38, Glu60, Asp85, and Asn105 each coordinate S-adenosyl-L-methionine.

It belongs to the class I-like SAM-binding methyltransferase superfamily. rRNA adenine N(6)-methyltransferase family. RsmA subfamily.

It localises to the cytoplasm. The catalysed reaction is adenosine(1518)/adenosine(1519) in 16S rRNA + 4 S-adenosyl-L-methionine = N(6)-dimethyladenosine(1518)/N(6)-dimethyladenosine(1519) in 16S rRNA + 4 S-adenosyl-L-homocysteine + 4 H(+). Specifically dimethylates two adjacent adenosines (A1518 and A1519) in the loop of a conserved hairpin near the 3'-end of 16S rRNA in the 30S particle. May play a critical role in biogenesis of 30S subunits. This chain is Ribosomal RNA small subunit methyltransferase A, found in Neorickettsia sennetsu (strain ATCC VR-367 / Miyayama) (Ehrlichia sennetsu).